Consider the following 490-residue polypeptide: Cobyric acid synthase (490 aa).

One can recognise a GATase cobBQ-type domain in the interval 252-428 (ARRVAVVRLP…WHGAFEGDAL (177 aa)). Residue Cys333 is the Nucleophile of the active site. Residue His420 is part of the active site.

Belongs to the CobB/CobQ family. CobQ subfamily.

It functions in the pathway cofactor biosynthesis; adenosylcobalamin biosynthesis. In terms of biological role, catalyzes amidations at positions B, D, E, and G on adenosylcobyrinic A,C-diamide. NH(2) groups are provided by glutamine, and one molecule of ATP is hydrogenolyzed for each amidation. The chain is Cobyric acid synthase from Mycolicibacterium vanbaalenii (strain DSM 7251 / JCM 13017 / BCRC 16820 / KCTC 9966 / NRRL B-24157 / PYR-1) (Mycobacterium vanbaalenii).